An 81-amino-acid polypeptide reads, in one-letter code: Protein RALF-like 7 (81 aa).

The first 29 residues, 1 to 29, serve as a signal peptide directing secretion; it reads MSARKKNRIHVFFVSIMIIISLVSGFGEG. 2 cysteine pairs are disulfide-bonded: Cys-46/Cys-54 and Cys-66/Cys-72.

This sequence belongs to the plant rapid alkalinization factor (RALF) family.

The protein resides in the secreted. In terms of biological role, cell signaling peptide that may regulate plant stress, growth, and development. Mediates a rapid alkalinization of extracellular space by mediating a transient increase in the cytoplasmic Ca(2+) concentration leading to a calcium-dependent signaling events through a cell surface receptor and a concomitant activation of some intracellular mitogen-activated protein kinases. The sequence is that of Protein RALF-like 7 (RALFL7) from Arabidopsis thaliana (Mouse-ear cress).